The chain runs to 354 residues: NADH-quinone oxidoreductase subunit H (354 aa).

Helical transmembrane passes span 23–43 (LVRA…LILW), 91–111 (YIIA…VIPF), 124–144 (LLYV…AGWA), 162–182 (ISYE…TGSL), 203–223 (ILSW…ISGV), 250–270 (GMAF…ISAL), 291–311 (IPGF…FIWL), and 330–350 (IFIP…VSPW).

This sequence belongs to the complex I subunit 1 family. In terms of assembly, NDH-1 is composed of 14 different subunits. Subunits NuoA, H, J, K, L, M, N constitute the membrane sector of the complex.

The protein resides in the cell inner membrane. It catalyses the reaction a quinone + NADH + 5 H(+)(in) = a quinol + NAD(+) + 4 H(+)(out). NDH-1 shuttles electrons from NADH, via FMN and iron-sulfur (Fe-S) centers, to quinones in the respiratory chain. The immediate electron acceptor for the enzyme in this species is believed to be ubiquinone. Couples the redox reaction to proton translocation (for every two electrons transferred, four hydrogen ions are translocated across the cytoplasmic membrane), and thus conserves the redox energy in a proton gradient. This subunit may bind ubiquinone. The polypeptide is NADH-quinone oxidoreductase subunit H (Ralstonia pickettii (strain 12J)).